The chain runs to 270 residues: Formamidopyrimidine-DNA glycosylase (270 aa).

Pro-2 acts as the Schiff-base intermediate with DNA in catalysis. Residue Glu-3 is the Proton donor of the active site. The active-site Proton donor; for beta-elimination activity is Lys-58. 3 residues coordinate DNA: His-91, Arg-110, and Arg-151. The FPG-type zinc-finger motif lies at 236 to 270 (FVYGRGGEFCKVCGSTLREIRLGQRASVYCPRCQR). The active-site Proton donor; for delta-elimination activity is the Arg-260.

The protein belongs to the FPG family. In terms of assembly, monomer. Zn(2+) is required as a cofactor.

It catalyses the reaction Hydrolysis of DNA containing ring-opened 7-methylguanine residues, releasing 2,6-diamino-4-hydroxy-5-(N-methyl)formamidopyrimidine.. The catalysed reaction is 2'-deoxyribonucleotide-(2'-deoxyribose 5'-phosphate)-2'-deoxyribonucleotide-DNA = a 3'-end 2'-deoxyribonucleotide-(2,3-dehydro-2,3-deoxyribose 5'-phosphate)-DNA + a 5'-end 5'-phospho-2'-deoxyribonucleoside-DNA + H(+). Its function is as follows. Involved in base excision repair of DNA damaged by oxidation or by mutagenic agents. Acts as a DNA glycosylase that recognizes and removes damaged bases. Has a preference for oxidized purines, such as 7,8-dihydro-8-oxoguanine (8-oxoG). Has AP (apurinic/apyrimidinic) lyase activity and introduces nicks in the DNA strand. Cleaves the DNA backbone by beta-delta elimination to generate a single-strand break at the site of the removed base with both 3'- and 5'-phosphates. The polypeptide is Formamidopyrimidine-DNA glycosylase (Pseudomonas aeruginosa (strain LESB58)).